A 703-amino-acid polypeptide reads, in one-letter code: Elongation factor G (703 aa).

In terms of domain architecture, tr-type G spans Ala-8–Thr-290. GTP contacts are provided by residues Ala-17–Thr-24, Asp-88–His-92, and Asn-142–Asp-145.

The protein belongs to the TRAFAC class translation factor GTPase superfamily. Classic translation factor GTPase family. EF-G/EF-2 subfamily.

It localises to the cytoplasm. Functionally, catalyzes the GTP-dependent ribosomal translocation step during translation elongation. During this step, the ribosome changes from the pre-translocational (PRE) to the post-translocational (POST) state as the newly formed A-site-bound peptidyl-tRNA and P-site-bound deacylated tRNA move to the P and E sites, respectively. Catalyzes the coordinated movement of the two tRNA molecules, the mRNA and conformational changes in the ribosome. This is Elongation factor G from Teredinibacter turnerae (strain ATCC 39867 / T7901).